The chain runs to 346 residues: STE20-related kinase adapter protein stlk (346 aa).

The region spanning 10–298 (YKLLEILKNG…ASKLMTHSFL (289 aa)) is the Protein kinase domain. Residues 16–24 (LKNGMIGTV) and Lys-38 contribute to the ATP site.

This sequence belongs to the protein kinase superfamily. STE Ser/Thr protein kinase family. STE20 subfamily.

The chain is STE20-related kinase adapter protein stlk from Drosophila melanogaster (Fruit fly).